We begin with the raw amino-acid sequence, 221 residues long: MNSNVENLPPQVLRLVYKEVSALAADPPEGIKIYPSEEDITELHTSIEGPEGTPYAGGVFRMRLVLGKDFPAVPPRGYFLTKIFHPNVGHKGEICVNVLKRDWKAELGLRHVLLTIKCLLIHPNPESALNEEAGKLLLEDYKEYASRAHLLTEIHAMGGTSGAPQEPADGPQPKKHAGDPNKRVVGAGLPTMGTGTNNSNISNTNIVAKKKTDKKRALRRL.

Residues 11-157 (QVLRLVYKEV…AHLLTEIHAM (147 aa)) enclose the UBC core domain. Cysteine 95 acts as the Glycyl thioester intermediate in catalysis. A disordered region spans residues 158 to 221 (GGTSGAPQEP…TDKKRALRRL (64 aa)). Residues 193–206 (GTGTNNSNISNTNI) show a composition bias toward low complexity. The segment covering 208-221 (AKKKTDKKRALRRL) has biased composition (basic residues).

The protein belongs to the ubiquitin-conjugating enzyme family.

The catalysed reaction is S-ubiquitinyl-[E1 ubiquitin-activating enzyme]-L-cysteine + [E2 ubiquitin-conjugating enzyme]-L-cysteine = [E1 ubiquitin-activating enzyme]-L-cysteine + S-ubiquitinyl-[E2 ubiquitin-conjugating enzyme]-L-cysteine.. The protein operates within protein modification; protein ubiquitination. Its function is as follows. Catalyzes the covalent attachment of ubiquitin to other proteins. Acts as an essential factor of the anaphase promoting complex/cyclosome (APC/C), a cell cycle-regulated ubiquitin ligase that controls progression through mitosis. Acts by specifically elongating 'Lys-11'-linked polyubiquitin chains initiated by the E2 enzyme ube2c/ubch10 on APC/C substrates, enhancing the degradation of APC/C substrates by the proteasome and promoting mitotic exit. This chain is Ubiquitin-conjugating enzyme E2 S (ube2s), found in Danio rerio (Zebrafish).